A 66-amino-acid chain; its full sequence is VRDGYIALPHNCAYGCLNNEYCNNLCTKDGAKIGYCNIVGKYGNACWCIQLPDNVPIRVPGRCHPA.

Positions 2–64 constitute an LCN-type CS-alpha/beta domain; that stretch reads RDGYIALPHN…VPIRVPGRCH (63 aa). 4 cysteine pairs are disulfide-bonded: Cys12–Cys63, Cys16–Cys36, Cys22–Cys46, and Cys26–Cys48.

The protein belongs to the long (4 C-C) scorpion toxin superfamily. Sodium channel inhibitor family. Alpha subfamily. Expressed by the venom gland.

It is found in the secreted. Its function is as follows. Alpha toxins bind voltage-independently at site-3 of sodium channels (Nav) and inhibit the inactivation of the activated channels, thereby blocking neuronal transmission. This toxin is active on both mammals and insects. It can be considered as a cardiotoxin, as it can bind to human cardiac sodium channel and modify its normal properties. The chain is Alpha-like toxin BmK-M7 from Olivierus martensii (Manchurian scorpion).